A 276-amino-acid polypeptide reads, in one-letter code: N-acyl homoserine lactonase AiiB (276 aa).

Zn(2+) contacts are provided by His-111, His-113, His-116, His-191, Asp-213, and His-259.

It belongs to the metallo-beta-lactamase superfamily. Requires Zn(2+) as cofactor.

It carries out the reaction an N-acyl-L-homoserine lactone + H2O = an N-acyl-L-homoserine + H(+). The sequence is that of N-acyl homoserine lactonase AiiB from Agrobacterium fabrum (strain C58 / ATCC 33970) (Agrobacterium tumefaciens (strain C58)).